The chain runs to 840 residues: Heat shock 70 kDa protein 4 (840 aa).

Lys-53 carries the N6-acetyllysine modification. Ser-76 carries the phosphoserine modification. Phosphotyrosine is present on residues Tyr-89 and Tyr-336. A phosphoserine mark is found at Ser-393 and Ser-415. Lys-430 is modified (N6-acetyllysine). The interval 500–575 is disordered; that stretch reads VHKSEESEEP…QAKKAKVKTS (76 aa). Residues 514-533 show a composition bias toward basic and acidic residues; it reads QNAKEEEKMQVDQEEPHTEE. Thr-538 is modified (phosphothreonine). The residue at position 546 (Ser-546) is a Phosphoserine. Phosphotyrosine is present on Tyr-660. The residue at position 756 (Ser-756) is a Phosphoserine. Lys-773 bears the N6-methyllysine mark. A disordered region spans residues 781–840; the sequence is PIISKPKPKVEPPKEEPKHAEQNGPVDGQGDNPGTQAAEHGADTAVPSDGDKKLPEMDID. Basic and acidic residues-rich tracts occupy residues 788–801 and 829–840; these read PKVE…KHAE and DGDKKLPEMDID.

Belongs to the heat shock protein 70 family. In terms of assembly, interacts with TJP1/ZO-1. Ubiquitous. Highly expressed in testis.

Its subcellular location is the cytoplasm. The chain is Heat shock 70 kDa protein 4 (Hspa4) from Rattus norvegicus (Rat).